Reading from the N-terminus, the 65-residue chain is UPF0291 protein BBR47_33060 (65 aa).

It belongs to the UPF0291 family.

The protein resides in the cytoplasm. The polypeptide is UPF0291 protein BBR47_33060 (Brevibacillus brevis (strain 47 / JCM 6285 / NBRC 100599)).